Consider the following 424-residue polypeptide: Light-independent protochlorophyllide reductase subunit N (424 aa).

[4Fe-4S] cluster-binding residues include cysteine 16, cysteine 41, and cysteine 102.

This sequence belongs to the BchN/ChlN family. As to quaternary structure, protochlorophyllide reductase is composed of three subunits; ChlL, ChlN and ChlB. Forms a heterotetramer of two ChlB and two ChlN subunits. The cofactor is [4Fe-4S] cluster.

The catalysed reaction is chlorophyllide a + oxidized 2[4Fe-4S]-[ferredoxin] + 2 ADP + 2 phosphate = protochlorophyllide a + reduced 2[4Fe-4S]-[ferredoxin] + 2 ATP + 2 H2O. It participates in porphyrin-containing compound metabolism; chlorophyll biosynthesis (light-independent). Functionally, component of the dark-operative protochlorophyllide reductase (DPOR) that uses Mg-ATP and reduced ferredoxin to reduce ring D of protochlorophyllide (Pchlide) to form chlorophyllide a (Chlide). This reaction is light-independent. The NB-protein (ChlN-ChlB) is the catalytic component of the complex. This chain is Light-independent protochlorophyllide reductase subunit N, found in Synechococcus sp. (strain WH7803).